Reading from the N-terminus, the 328-residue chain is Arabinose 5-phosphate isomerase KdsD (328 aa).

Residues 42-184 (CEKMFWCKGK…AVALLKARGF (143 aa)) enclose the SIS domain. Substrate contacts are provided by residues 75–76 (GT), His-82, His-88, 114–123 (ALIPVLKRLH), 148–150 (KVA), Thr-222, and Asp-275. His-82 is a Zn(2+) binding site. Residues 210–268 (MHTGDEIPHVKKTASLRDALLEVTRKNLGMTVICDDNMMIEGIFTDGDLRRVFDMGVDV) form the CBS 1 domain. The 52-residue stretch at 277–328 (MTPGGIRVRPGILAVEALNLMQSRHITSVMVADGDHLLGVLHMHDLLRAGVV) folds into the CBS 2 domain.

It belongs to the SIS family. GutQ/KpsF subfamily. In terms of assembly, homotetramer.

It carries out the reaction D-arabinose 5-phosphate = D-ribulose 5-phosphate. The protein operates within carbohydrate biosynthesis; 3-deoxy-D-manno-octulosonate biosynthesis; 3-deoxy-D-manno-octulosonate from D-ribulose 5-phosphate: step 1/3. It functions in the pathway bacterial outer membrane biogenesis; lipopolysaccharide biosynthesis. Its activity is regulated as follows. Completely inhibited by 10 uM of nickel, copper, cadmium and mercury ions. Inhibited by zinc with an IC(50) of 1-3 uM. Metal ion inhibition may be a mechanism to control activity in vivo. Involved in the biosynthesis of 3-deoxy-D-manno-octulosonate (KDO), a unique 8-carbon sugar component of lipopolysaccharides (LPSs). KdsD is not essential in the KDO biosynthesis and can be substituted by GutQ. Catalyzes the reversible aldol-ketol isomerization between D-ribulose 5-phosphate (Ru5P) and D-arabinose 5-phosphate (A5P). The polypeptide is Arabinose 5-phosphate isomerase KdsD (kdsD) (Escherichia coli (strain K12)).